Here is a 234-residue protein sequence, read N- to C-terminus: Glucosamine-6-phosphate deaminase (234 aa).

Asp62 acts as the Proton acceptor; for enolization step in catalysis. The For ring-opening step role is filled by Asn128. The Proton acceptor; for ring-opening step role is filled by His130. Residue Glu135 is the For ring-opening step of the active site.

This sequence belongs to the glucosamine/galactosamine-6-phosphate isomerase family. NagB subfamily.

The catalysed reaction is alpha-D-glucosamine 6-phosphate + H2O = beta-D-fructose 6-phosphate + NH4(+). It participates in amino-sugar metabolism; N-acetylneuraminate degradation; D-fructose 6-phosphate from N-acetylneuraminate: step 5/5. Functionally, catalyzes the reversible isomerization-deamination of glucosamine 6-phosphate (GlcN6P) to form fructose 6-phosphate (Fru6P) and ammonium ion. This chain is Glucosamine-6-phosphate deaminase, found in Streptococcus suis (strain 98HAH33).